The following is a 393-amino-acid chain: NAD(P)H-quinone oxidoreductase subunit H, chloroplastic (393 aa).

The protein belongs to the complex I 49 kDa subunit family. NDH is composed of at least 16 different subunits, 5 of which are encoded in the nucleus.

The protein localises to the plastid. The protein resides in the chloroplast thylakoid membrane. The catalysed reaction is a plastoquinone + NADH + (n+1) H(+)(in) = a plastoquinol + NAD(+) + n H(+)(out). It catalyses the reaction a plastoquinone + NADPH + (n+1) H(+)(in) = a plastoquinol + NADP(+) + n H(+)(out). In terms of biological role, NDH shuttles electrons from NAD(P)H:plastoquinone, via FMN and iron-sulfur (Fe-S) centers, to quinones in the photosynthetic chain and possibly in a chloroplast respiratory chain. The immediate electron acceptor for the enzyme in this species is believed to be plastoquinone. Couples the redox reaction to proton translocation, and thus conserves the redox energy in a proton gradient. This Populus alba (White poplar) protein is NAD(P)H-quinone oxidoreductase subunit H, chloroplastic.